The chain runs to 208 residues: Probable GTP-binding protein EngB (208 aa).

An EngB-type G domain is found at 23-205 (LTSEMVILGR…RQTLLKYLLT (183 aa)). GTP contacts are provided by residues 31-38 (GRSNVGKS), 57-61 (GKTRL), 84-87 (DLPG), 154-157 (TKFD), and 182-184 (FNA). The Mg(2+) site is built by serine 38 and threonine 59.

The protein belongs to the TRAFAC class TrmE-Era-EngA-EngB-Septin-like GTPase superfamily. EngB GTPase family. Mg(2+) is required as a cofactor.

Its function is as follows. Necessary for normal cell division and for the maintenance of normal septation. In Helicobacter pylori (strain J99 / ATCC 700824) (Campylobacter pylori J99), this protein is Probable GTP-binding protein EngB.